A 57-amino-acid polypeptide reads, in one-letter code: UPF0391 membrane protein RPD_3366 (57 aa).

Transmembrane regions (helical) follow at residues 4–24 (WVVTFLVVALIAGILGFGGIA) and 30–50 (IAKVIFFIAVVLFLISAVVGL).

It belongs to the UPF0391 family.

It localises to the cell membrane. The chain is UPF0391 membrane protein RPD_3366 from Rhodopseudomonas palustris (strain BisB5).